Consider the following 295-residue polypeptide: Zinc finger transcription factor pqm-1 (295 aa).

The disordered stretch occupies residues 1 to 23 (MSFLNNDFGSPPATSSPPTTMPK). Low complexity predominate over residues 10–22 (SPPATSSPPTTMP). The C2H2-type 1; degenerate zinc-finger motif lies at 161–183 (YMCTVCRKVYGRYNSVSYHVTIY). A C2H2-type 2 zinc finger spans residues 227–249 (RKCPHCRHVSKSPAMLEKHIRRH).

Belongs to the krueppel C2H2-type zinc-finger protein family. In terms of assembly, interacts with ceh-60.

Its subcellular location is the chromosome. It localises to the nucleus. It is found in the cytoplasm. In terms of biological role, zinc finger transcription factor which acts as both a transcriptional activator and repressor. Binds to the promoters of genes that contain the 5'-CTTATCA-3' DNA consensus sequence in their regulatory region. Functions downstream of the Insulin/IGF-1-like signaling (IIS) mediated pathway. Involved in normal development, lifespan, stress response, lipid metabolism, innate immunity and exit from the developmentally arrested larval state known as dauer. Required for stress-induced expression of hsp-90 and resistance to heat stress, perhaps as part of a systemic stress signaling pathway. Involved in maintenance of proteostasis. Under hypoxic stress increases lipid levels by positively regulating fatty acid synthesis via fat-7 expression. Associates with homeobox protein ceh-60 at the promoters of some stress-responsive genes to regulate expression; may require phosphorylation for transcriptional repression activity. Acts downstream of nhr-14 to activate transcription of intestinal metal transporter smf-3, modulating innate immunity and iron uptake. May act downstream of the mTORC2 signaling mediated pathway. May act in a mutually exclusive manner with the FOXO transcription factor daf-16. This chain is Zinc finger transcription factor pqm-1, found in Caenorhabditis elegans.